A 596-amino-acid polypeptide reads, in one-letter code: Proteasome-associated ATPase (596 aa).

The stretch at 12 to 94 forms a coiled coil; the sequence is SRWERETQDL…KEEIDRLAQP (83 aa). 280–285 is an ATP binding site; that stretch reads GCGKTL. Residues 595–596 form a docks into pockets in the proteasome alpha-ring region; it reads YL.

The protein belongs to the AAA ATPase family. As to quaternary structure, homohexamer. Assembles into a hexameric ring structure that caps the 20S proteasome core. Strongly interacts with the prokaryotic ubiquitin-like protein Pup through a hydrophobic interface; the interacting region of ARC lies in its N-terminal coiled-coil domain. There is one Pup binding site per ARC hexamer ring. Upon ATP-binding, the C-terminus of ARC interacts with the alpha-rings of the proteasome core, possibly by binding to the intersubunit pockets.

The protein operates within protein degradation; proteasomal Pup-dependent pathway. In terms of biological role, ATPase which is responsible for recognizing, binding, unfolding and translocation of pupylated proteins into the bacterial 20S proteasome core particle. May be essential for opening the gate of the 20S proteasome via an interaction with its C-terminus, thereby allowing substrate entry and access to the site of proteolysis. Thus, the C-termini of the proteasomal ATPase may function like a 'key in a lock' to induce gate opening and therefore regulate proteolysis. The sequence is that of Proteasome-associated ATPase from Stackebrandtia nassauensis (strain DSM 44728 / CIP 108903 / NRRL B-16338 / NBRC 102104 / LLR-40K-21).